Reading from the N-terminus, the 145-residue chain is Conglutin (145 aa).

The first 21 residues, 1-21 (MAKSTILVALLALVLVAHASA), serve as a signal peptide directing secretion. 5 disulfide bridges follow: cysteine 35–cysteine 92, cysteine 47–cysteine 79, cysteine 80–cysteine 128, cysteine 94–cysteine 136, and cysteine 105–cysteine 145.

It belongs to the 2S seed storage albumins family. As to expression, expressed in seeds. Not expressed in roots, pegs (budding ovaries) or leaves.

The chain is Conglutin from Arachis hypogaea (Peanut).